The following is an 851-amino-acid chain: ATP-dependent DNA helicase DDX31 (851 aa).

Positions 1 to 196 (MAPDLASQRH…STSDRNQEER (196 aa)) are disordered. Positions 230-259 (AAFHELGLHPHLISTINTVLKMSSMTSVQK) match the Q motif motif. Positions 262–443 (IPVLLEGRDA…DISLHDPVSI (182 aa)) constitute a Helicase ATP-binding domain. Residue 275–282 (SQTGSGKT) participates in ATP binding. The DEAD box motif lies at 388 to 391 (DEAD). The 180-residue stretch at 480–659 (SLKQHVTVVP…VSEIKMEDIL (180 aa)) folds into the Helicase C-terminal domain. Disordered regions lie at residues 762-784 (KKRKAHVKRPDLHKKTQSKHSLA) and 804-851 (KQNA…SQKV). The residue at position 828 (Arg828) is an Omega-N-methylarginine. Positions 841–851 (VQRDSKTSQKV) are enriched in basic and acidic residues.

It belongs to the DEAD box helicase family. DDX31/DBP7 subfamily. In terms of assembly, interacts with NPM1; this interaction prevents interaction between NPM1 and HDM2. In terms of tissue distribution, weakly or undetectably expressed in normal organs. Up-regulated in renal cell carcinoma.

The protein localises to the nucleus. Its subcellular location is the nucleolus. It carries out the reaction ATP + H2O = ADP + phosphate + H(+). May have DNA helicase activity and RNA helicase activity. Probably have ssDNA and RNA dependent ATPase activity. Plays a role in ribosome biogenesis and TP53/p53 regulation through its interaction with NPM1. This is ATP-dependent DNA helicase DDX31 from Homo sapiens (Human).